The following is a 403-amino-acid chain: Accessory Sec system protein translocase subunit SecY2 (403 aa).

The next 10 membrane-spanning stretches (helical) occupy residues 17–37 (MLYT…SIVS), 63–83 (LNIF…LMLI), 105–125 (ILTL…YVSK), 131–151 (DNIY…VWLA), 157–177 (YGIA…MMHQ), 186–206 (HIVI…LLFI), 240–260 (ITLM…HFIL), 276–296 (FDSP…GYFL), 339–359 (WFGL…TLFV), and 366–386 (IYFS…AETI).

Belongs to the SecY/SEC61-alpha family. SecY2 subfamily. As to quaternary structure, may form heterotrimers with SecE and SecG subunits (Potential). Component of the accessory SecA2/SecY2 protein translocase complex required to export cell wall protein SrpA.

It is found in the cell membrane. Its function is as follows. The central subunit of a protein translocation channel (Potential). Part of the accessory SecA2/SecY2 system specifically required to export SraP, a serine-rich repeat cell wall protein encoded upstream in the same operon. The protein is Accessory Sec system protein translocase subunit SecY2 of Staphylococcus aureus (strain NCTC 8325 / PS 47).